Consider the following 895-residue polypeptide: Putative endoplasmic reticulum metallopeptidase 1-B (895 aa).

Residues 1–27 (MSTGIRRRHADEKKNILEKESLQNDET) form a disordered region. Over 1–39 (MSTGIRRRHADEKKNILEKESLQNDETQREMEKDISLLR) the chain is Cytoplasmic. Residues 9 to 27 (HADEKKNILEKESLQNDET) are compositionally biased toward basic and acidic residues. A helical membrane pass occupies residues 40 to 60 (PAHWNFIGLFFLVLIIGTTFL). Topologically, residues 61–374 (HKCLPEPKDP…KPAEYADRKT (314 aa)) are lumenal. An N-linked (GlcNAc...) asparagine glycan is attached at N156. Residues H180 and D192 each contribute to the Zn(2+) site. The active-site Proton acceptor is E226. E227, E253, and H329 together coordinate Zn(2+). Residues 375 to 395 (VFFDFLGLFVIIYPLSIAHLV) form a helical membrane-spanning segment. Topologically, residues 396–424 (NMLTICTVIALMSHRFYSKTFITFLALRD) are cytoplasmic. The helical transmembrane segment at 425–445 (YVLTILTIALVLKAMTFMSLF) threads the bilayer. Over 446–457 (TYGALRWYTRHW) the chain is Lumenal. A helical membrane pass occupies residues 458 to 478 (LALVAYGLPSVWAGISVQGLL). The Cytoplasmic portion of the chain corresponds to 479–489 (TARLAPKAREE). A helical transmembrane segment spans residues 490–512 (YGSTLELIHLTLISGILLAFTYY). The Lumenal segment spans residues 513-515 (DIA). Residues 516-538 (SGFLFALLLVPAIKSIITYFGAW) form a helical membrane-spanning segment. The Cytoplasmic portion of the chain corresponds to 539–553 (PTCPTFNTILTLILS). Residues 554 to 574 (FPGCAMAIYTTEMLLSIFIPI) form a helical membrane-spanning segment. Residues 575–584 (MGRSSYNPEP) lie on the Lumenal side of the membrane. Residues 585–605 (AVSFFVAFSAGCIVLSLGGLV) form a helical membrane-spanning segment. The Cytoplasmic segment spans residues 606–619 (AKSRNSRSSNEAGL). Residues 620-640 (LELIYNILGVLLVTLTILYVF) form a helical membrane-spanning segment. Topologically, residues 641–895 (SSFWPSPYRF…WNVDQVYKYF (255 aa)) are lumenal. N679 and N796 each carry an N-linked (GlcNAc...) asparagine glycan.

This sequence belongs to the peptidase M28 family. It depends on Zn(2+) as a cofactor.

The protein localises to the endoplasmic reticulum membrane. This chain is Putative endoplasmic reticulum metallopeptidase 1-B, found in Caenorhabditis elegans.